Reading from the N-terminus, the 363-residue chain is Molybdenum import ATP-binding protein ModC (363 aa).

In terms of domain architecture, ABC transporter spans methionine 1–tyrosine 232. Residue glycine 30–threonine 37 participates in ATP binding. Positions arginine 292–aspartate 358 constitute a Mop domain.

This sequence belongs to the ABC transporter superfamily. Molybdate importer (TC 3.A.1.8) family. As to quaternary structure, the complex is composed of two ATP-binding proteins (ModC), two transmembrane proteins (ModB) and a solute-binding protein (ModA).

It is found in the cell inner membrane. The catalysed reaction is molybdate(out) + ATP + H2O = molybdate(in) + ADP + phosphate + H(+). Its function is as follows. Part of the ABC transporter complex ModABC involved in molybdenum import. Responsible for energy coupling to the transport system. The protein is Molybdenum import ATP-binding protein ModC of Paramagnetospirillum magneticum (strain ATCC 700264 / AMB-1) (Magnetospirillum magneticum).